A 618-amino-acid chain; its full sequence is Probable protein disulfide-isomerase A4 (618 aa).

The N-terminal stretch at 1–21 is a signal peptide; it reads MMFDRRFFALVVLLCVSAVRS. Thioredoxin domains follow at residues 22–139, 138–254, and 480–609; these read TEDA…SRVD, VDPN…DQSK, and SSGK…KHGV. Cystine bridges form between C65–C68, C176–C179, and C529–C532. The Prevents secretion from ER motif lies at 615–618; it reads KDEL.

The protein belongs to the protein disulfide isomerase family.

It is found in the endoplasmic reticulum lumen. The enzyme catalyses Catalyzes the rearrangement of -S-S- bonds in proteins.. This chain is Probable protein disulfide-isomerase A4, found in Caenorhabditis elegans.